The following is a 381-amino-acid chain: G-protein coupled receptor homolog Q2/3L (381 aa).

Topologically, residues 1 to 91 (MNYTLSTVSS…HCDDGVDTTS (91 aa)) are extracellular. 7 N-linked (GlcNAc...) asparagine; by host glycosylation sites follow: asparagine 2, asparagine 15, asparagine 19, asparagine 41, asparagine 50, asparagine 56, and asparagine 62. The helical transmembrane segment at 92–112 (FGLITLYSTIFFLGLFGNIIV) threads the bilayer. Residues 113-126 (LTVLRKYKIKTIQD) are Cytoplasmic-facing. Residues 127 to 147 (MFLLNLTLSDLIFVLVFPFNL) form a helical membrane-spanning segment. Topologically, residues 148 to 165 (YDSIAKQWSLGDCLCKFK) are extracellular. The helical transmembrane segment at 166–186 (AMFYFVGFYNSMSFITLMSID) threads the bilayer. Residues 187-206 (RYLAVVHPVKSMPIRTKRYG) are Cytoplasmic-facing. The helical transmembrane segment at 207 to 227 (IVLSMVVWIVSTIESFPIMLF) threads the bilayer. Residues 228–251 (YETKKVYGITYCHVFYNDNAKIWK) are Extracellular-facing. A helical membrane pass occupies residues 252–272 (LFINFEINIFGMIIPLTILLY). Residues 273–294 (CYYKILNTLKTSQTKNKKAIKM) lie on the Cytoplasmic side of the membrane. The chain crosses the membrane as a helical span at residues 295 to 315 (VFLIVICSVLFLLPFSVTVFV). The Extracellular segment spans residues 316–336 (SSLYLLNVFSGCMALRFVNLA). A helical membrane pass occupies residues 337–357 (VHVAEIVSLCHCFINPLIYAF). The Cytoplasmic segment spans residues 358-381 (CSREFTKKLLRLRTTSSAGSISIG).

It belongs to the G-protein coupled receptor 1 family.

Its subcellular location is the host cell membrane. Putative chemokine receptor. In Ovis aries (Sheep), this protein is G-protein coupled receptor homolog Q2/3L.